A 612-amino-acid polypeptide reads, in one-letter code: UvrABC system protein C (612 aa).

The GIY-YIG domain maps to 11–90 (TASGVYLMKG…IKKYRPRYNI (80 aa)). The UVR domain maps to 200–235 (SEVVESLQHQMAAAAERMAFEEAARLRDQLRAIEQT).

It belongs to the UvrC family. In terms of assembly, interacts with UvrB in an incision complex.

The protein resides in the cytoplasm. In terms of biological role, the UvrABC repair system catalyzes the recognition and processing of DNA lesions. UvrC both incises the 5' and 3' sides of the lesion. The N-terminal half is responsible for the 3' incision and the C-terminal half is responsible for the 5' incision. This chain is UvrABC system protein C, found in Syntrophotalea carbinolica (strain DSM 2380 / NBRC 103641 / GraBd1) (Pelobacter carbinolicus).